We begin with the raw amino-acid sequence, 152 residues long: Histone H2B.1 (152 aa).

Residues 1 to 23 (MAPKAEKKPAEKKPAAGEEKSAE) are compositionally biased toward basic and acidic residues. Residues 1 to 60 (MAPKAEKKPAEKKPAAGEEKSAEKAPAGKKPKAEKRLPASKASSKEGGAGDKKGRKKAKK) form a disordered region. 2 positions are modified to N6-acetyllysine: K7 and K35. Residue K148 forms a Glycyl lysine isopeptide (Lys-Gly) (interchain with G-Cter in ubiquitin) linkage.

Belongs to the histone H2B family. As to quaternary structure, the nucleosome is a histone octamer containing two molecules each of H2A, H2B, H3 and H4 assembled in one H3-H4 heterotetramer and two H2A-H2B heterodimers. The octamer wraps approximately 147 bp of DNA. Can be acetylated to form H2BK6ac and H2BK33ac. In terms of processing, monoubiquitinated by BRE1 to form H2BK143ub1 and deubiquitinated by UBP26. Required for heterochromatic histone H3 di- and trimethylation at H3K4me. May give a specific tag for epigenetic transcriptional activation.

The protein localises to the nucleus. It localises to the chromosome. Core component of nucleosome. Nucleosomes wrap and compact DNA into chromatin, limiting DNA accessibility to the cellular machineries which require DNA as a template. Histones thereby play a central role in transcription regulation, DNA repair, DNA replication and chromosomal stability. DNA accessibility is regulated via a complex set of post-translational modifications of histones, also called histone code, and nucleosome remodeling. The polypeptide is Histone H2B.1 (Oryza sativa subsp. indica (Rice)).